The sequence spans 544 residues: Propane 2-monooxygenase, hydroxylase component large subunit (544 aa).

The Fe cation site is built by glutamate 97, glutamate 127, histidine 130, glutamate 192, glutamate 226, and histidine 229.

This sequence belongs to the TmoA/XamoA family. As to quaternary structure, the propane 2-monooxygenase multicomponent enzyme system is composed of an electron transfer component and a monooxygenase component interacting with the effector protein PrmD. The electron transfer component is composed of a reductase (PrmB), and the monooxygenase component is formed by a large subunit (PrmA) and a small subunit (PrmC). Probably requires the presence of the chaperonin-like protein PrmG to ensure a productive folding, resulting of a soluble PrmA, which leads to the active form of PrmABCD. Fe(2+) serves as cofactor.

The enzyme catalyses propane + NADH + O2 + H(+) = propan-2-ol + NAD(+) + H2O. Component of the propane 2-monooxygenase multicomponent enzyme system which is involved in the degradation of propane via the O2-dependent hydroxylation of propane. Also able to catalyze the oxidation the water contaminant N-nitrosodimethylamine (NDMA). This Rhodococcus jostii (strain RHA1) protein is Propane 2-monooxygenase, hydroxylase component large subunit.